The sequence spans 557 residues: Formate--tetrahydrofolate ligase (557 aa).

67-74 (TPAGEGKS) is a binding site for ATP.

Belongs to the formate--tetrahydrofolate ligase family.

The catalysed reaction is (6S)-5,6,7,8-tetrahydrofolate + formate + ATP = (6R)-10-formyltetrahydrofolate + ADP + phosphate. It participates in one-carbon metabolism; tetrahydrofolate interconversion. The sequence is that of Formate--tetrahydrofolate ligase from Latilactobacillus sakei subsp. sakei (strain 23K) (Lactobacillus sakei subsp. sakei).